A 589-amino-acid polypeptide reads, in one-letter code: 2-succinyl-5-enolpyruvyl-6-hydroxy-3-cyclohexene-1-carboxylate synthase (589 aa).

This sequence belongs to the TPP enzyme family. MenD subfamily. Homodimer. Mg(2+) serves as cofactor. Requires Mn(2+) as cofactor. Thiamine diphosphate is required as a cofactor.

It carries out the reaction isochorismate + 2-oxoglutarate + H(+) = 5-enolpyruvoyl-6-hydroxy-2-succinyl-cyclohex-3-ene-1-carboxylate + CO2. It functions in the pathway quinol/quinone metabolism; 1,4-dihydroxy-2-naphthoate biosynthesis; 1,4-dihydroxy-2-naphthoate from chorismate: step 2/7. The protein operates within quinol/quinone metabolism; menaquinone biosynthesis. Catalyzes the thiamine diphosphate-dependent decarboxylation of 2-oxoglutarate and the subsequent addition of the resulting succinic semialdehyde-thiamine pyrophosphate anion to isochorismate to yield 2-succinyl-5-enolpyruvyl-6-hydroxy-3-cyclohexene-1-carboxylate (SEPHCHC). The sequence is that of 2-succinyl-5-enolpyruvyl-6-hydroxy-3-cyclohexene-1-carboxylate synthase from Myxococcus xanthus (strain DK1622).